The sequence spans 512 residues: ETS translocation variant 3 (512 aa).

Positions 35-116 (IQLWHFILEL…KGKRFTYKFN (82 aa)) form a DNA-binding region, ETS. Residues 136-222 (VPQSAPPVPT…NAIGGGGIGH (87 aa)) are disordered. 3 positions are modified to phosphoserine: Ser-139, Ser-159, and Ser-315. A compositionally biased stretch (polar residues) spans 158-184 (HSPTNDVQPGRFSASSLTASGQESSNG). The interval 336–512 (PEESTQFSIK…QGLATAAADA (177 aa)) is disordered. A compositionally biased stretch (basic and acidic residues) spans 380-406 (IKVEPASEKDPESLRQSAREKEEHTQE). Residue Lys-381 forms a Glycyl lysine isopeptide (Lys-Gly) (interchain with G-Cter in SUMO2) linkage. Lys-388 is subject to N6-acetyllysine; alternate. Lys-388 is covalently cross-linked (Glycyl lysine isopeptide (Lys-Gly) (interchain with G-Cter in SUMO2); alternate). Residues 443–452 (EPLEVTEDIE) are compositionally biased toward acidic residues. Basic and acidic residues-rich tracts occupy residues 453–468 (DRPGKEPSAPEKKEDA) and 479–491 (RWNDDPEARELSK).

The protein belongs to the ETS family.

The protein resides in the nucleus. Functionally, transcriptional repressor that contribute to growth arrest during terminal macrophage differentiation by repressing target genes involved in Ras-dependent proliferation. Represses MMP1 promoter activity. The chain is ETS translocation variant 3 (ETV3) from Pan troglodytes (Chimpanzee).